The sequence spans 261 residues: Na(+)-translocating NADH-quinone reductase subunit C (261 aa).

A helical transmembrane segment spans residues 12-32; it reads LGVVIGLSLVCSIIVSTAAVG. Thr229 carries the FMN phosphoryl threonine modification.

Belongs to the NqrC family. As to quaternary structure, composed of six subunits; NqrA, NqrB, NqrC, NqrD, NqrE and NqrF. It depends on FMN as a cofactor.

The protein localises to the cell inner membrane. It catalyses the reaction a ubiquinone + n Na(+)(in) + NADH + H(+) = a ubiquinol + n Na(+)(out) + NAD(+). Its function is as follows. NQR complex catalyzes the reduction of ubiquinone-1 to ubiquinol by two successive reactions, coupled with the transport of Na(+) ions from the cytoplasm to the periplasm. NqrA to NqrE are probably involved in the second step, the conversion of ubisemiquinone to ubiquinol. The polypeptide is Na(+)-translocating NADH-quinone reductase subunit C (Vibrio parahaemolyticus serotype O3:K6 (strain RIMD 2210633)).